The primary structure comprises 167 residues: Low molecular mass early light-inducible protein HV60, chloroplastic (167 aa).

Residues 1–33 (MATMMAMSSFAGAAVLPRGSARSLPALGRRTLV) constitute a chloroplast transit peptide. The next 2 membrane-spanning stretches (helical) occupy residues 101–121 (GQAW…VPLL) and 145–165 (FAMI…TPFI).

The protein belongs to the ELIP/psbS family.

It is found in the plastid. Its subcellular location is the chloroplast membrane. Probably involved in the integration of pigments into the mature pigment-protein complexes. The sequence is that of Low molecular mass early light-inducible protein HV60, chloroplastic from Hordeum vulgare (Barley).